The sequence spans 277 residues: Large ribosomal subunit protein uL2 (277 aa).

Disordered stretches follow at residues 34–55 (LQPL…RHHG) and 213–277 (WKGI…RKKK).

This sequence belongs to the universal ribosomal protein uL2 family. In terms of assembly, part of the 50S ribosomal subunit. Forms a bridge to the 30S subunit in the 70S ribosome.

Its function is as follows. One of the primary rRNA binding proteins. Required for association of the 30S and 50S subunits to form the 70S ribosome, for tRNA binding and peptide bond formation. It has been suggested to have peptidyltransferase activity; this is somewhat controversial. Makes several contacts with the 16S rRNA in the 70S ribosome. The polypeptide is Large ribosomal subunit protein uL2 (Staphylococcus haemolyticus (strain JCSC1435)).